The following is a 289-amino-acid chain: Right origin-binding protein (289 aa).

Residues 8–106 (RDLLIWLEGH…AQTPALYRRS (99 aa)) form the HTH araC/xylS-type domain. DNA-binding regions (H-T-H motif) lie at residues 25-46 (DNVA…KDVT) and 73-96 (ILDI…KKQF).

Its function is as follows. Transcriptional regulator. Binds to the right arm of the replication origin oriC of the chromosome. Rob binding may influence the formation of the nucleoprotein structure, required for oriC function in the initiation of replication. The protein is Right origin-binding protein (rob) of Escherichia coli O157:H7.